Consider the following 291-residue polypeptide: Proteasomal ubiquitin receptor ADRM1 homolog rpn1301 (291 aa).

Residues 1–114 form the Pru domain; sequence MSLITFKAGK…ERINSYIKDQ (114 aa). The disordered stretch occupies residues 135–162; that stretch reads TVEQSEPIAQPTESSKESSEIGAPNSDE. In terms of domain architecture, DEUBAD spans 178-290; the sequence is AQAGFGGSTV…ARFVSRNNGS (113 aa).

Belongs to the ADRM1 family. As to quaternary structure, component of the 19S proteasome regulatory particle complex. The 2 S.pombe rpn13 homologs, rpn1301 and rpn1302 are present at a 0.2-1 ratio.

It localises to the cytoplasm. Its subcellular location is the nucleus. Functionally, component of the 26S proteasome, a multiprotein complex involved in the ATP-dependent degradation of ubiquitinated proteins. This complex plays a key role in the maintenance of protein homeostasis by removing misfolded or damaged proteins, which could impair cellular functions, and by removing proteins whose functions are no longer required. Therefore, the proteasome participates in numerous cellular processes, including cell cycle progression, apoptosis, or DNA damage repair. Within the complex, functions as a proteasomal ubiquitin receptor. In Schizosaccharomyces pombe (strain 972 / ATCC 24843) (Fission yeast), this protein is Proteasomal ubiquitin receptor ADRM1 homolog rpn1301 (rpn1301).